A 479-amino-acid polypeptide reads, in one-letter code: ATP-dependent RNA helicase DDX19B (479 aa).

Alanine 2 bears the N-acetylalanine mark. Residues 2-300 (ATDSWALAVD…DPNVIKLKRE (299 aa)) form an N-terminal lobe region. The segment at 34-54 (TNGAVVKTNANAEKTDEEEKE) is disordered. An N-terminal helix region spans residues 55–68 (DRAAQSLLNKLIRS). Positions 92 to 120 (KSFEELRLKPQLLQGVYAMGFNRPSKIQE) match the Q motif motif. ATP contacts are provided by residues glutamine 119 and 138 to 145 (SQSGTGKT). Residues 125–295 (LMLAEPPQNL…QKVVPDPNVI (171 aa)) enclose the Helicase ATP-binding domain. Residues 242–245 (DEAD) carry the DEAD box motif. The interval 301–479 (EETLDTIKQY…DLDEIEKIAN (179 aa)) is C-terminal lobe. In terms of domain architecture, Helicase C-terminal spans 306-474 (TIKQYYVLCS…RLDTDDLDEI (169 aa)). The ATP site is built by arginine 429 and arginine 432.

Belongs to the DEAD box helicase family. DDX19/DBP5 subfamily. In terms of assembly, associates with the nuclear pore complex via interaction with NUP214. Interacts with NUP214 or RNA in a mutually exclusive manner.

The protein resides in the cytoplasm. It is found in the nucleus. It localises to the nucleoplasm. It carries out the reaction ATP + H2O = ADP + phosphate + H(+). ATP-dependent RNA helicase involved in mRNA export from the nucleus. Rather than unwinding RNA duplexes, DDX19B functions as a remodeler of ribonucleoprotein particles, whereby proteins bound to nuclear mRNA are dissociated and replaced by cytoplasmic mRNA binding proteins. This Homo sapiens (Human) protein is ATP-dependent RNA helicase DDX19B (DDX19B).